A 443-amino-acid chain; its full sequence is UDP-glucuronic acid decarboxylase 4 (443 aa).

Position 2 is an N-acetylalanine (A2). Over 2 to 43 (ASELTNRRHEIEQPEAESYYPKPIKPWFVAIRPIRYMLREQR) the chain is Cytoplasmic. Residues 44-64 (LVFVLVGIAIATLGFTIFSKS) traverse the membrane as a helical; Signal-anchor for type II membrane protein segment. Residues 65–443 (SNHQPIPYDV…DSSTTSSSTE (379 aa)) lie on the Lumenal side of the membrane. 151 to 176 (DNFFTGRKENVMHHFNNPNFEMIRHD) provides a ligand contact to NAD(+). Substrate is bound at residue R260. Catalysis depends on Y263, which acts as the Proton acceptor. 263-267 (YDEGK) is an NAD(+) binding site. N292 contributes to the substrate binding site. Residue R304 coordinates NAD(+). Substrate contacts are provided by residues 305 to 309 (VVSNF), 322 to 329 (YGDGKQTR), and 389 to 393 (DPHKR).

It belongs to the NAD(P)-dependent epimerase/dehydratase family. UDP-glucuronic acid decarboxylase subfamily. NAD(+) serves as cofactor.

Its subcellular location is the golgi apparatus. It localises to the golgi stack membrane. The enzyme catalyses UDP-alpha-D-glucuronate + H(+) = UDP-alpha-D-xylose + CO2. It functions in the pathway nucleotide-sugar biosynthesis; UDP-alpha-D-xylose biosynthesis; UDP-alpha-D-xylose from UDP-alpha-D-glucuronate: step 1/1. In terms of biological role, catalyzes the NAD-dependent decarboxylation of UDP-glucuronic acid to UDP-xylose. Necessary for the biosynthesis of the core tetrasaccharide in glycosaminoglycan biosynthesis. This is UDP-glucuronic acid decarboxylase 4 (UXS4) from Arabidopsis thaliana (Mouse-ear cress).